We begin with the raw amino-acid sequence, 465 residues long: Argininosuccinate lyase (465 aa).

Belongs to the lyase 1 family. Argininosuccinate lyase subfamily.

It localises to the cytoplasm. The catalysed reaction is 2-(N(omega)-L-arginino)succinate = fumarate + L-arginine. The protein operates within amino-acid biosynthesis; L-arginine biosynthesis; L-arginine from L-ornithine and carbamoyl phosphate: step 3/3. The polypeptide is Argininosuccinate lyase (Rhodopseudomonas palustris (strain ATCC BAA-98 / CGA009)).